The sequence spans 309 residues: Protein US16 (309 aa).

Transmembrane regions (helical) follow at residues 50 to 70 (GLLL…SLVF), 85 to 105 (VVWA…FVYF), 128 to 148 (LVLL…TCAC), 154 to 174 (VLTS…VVFI), 185 to 205 (FALI…IVFT), 210 to 230 (WPLR…AGHF), and 245 to 265 (DVAH…FLIL).

The protein belongs to the cytomegalovirus US12 family.

The protein localises to the host membrane. Its subcellular location is the host cytoplasm. The polypeptide is Protein US16 (US16) (Human cytomegalovirus (strain Merlin) (HHV-5)).